The sequence spans 76 residues: Gallerimycin (76 aa).

The signal sequence occupies residues 1 to 19; sequence MKIAFIVAISLAFLAVTSC.

The protein belongs to the invertebrate defensin family.

Its function is as follows. Has antifungal activity against the entomopathogenic fungus M.nisopliae, but does not display any antifungal activity against S.cerevisiae nor any antimicrobial activity against M.luteus, B.subtilis, and E.coli. This is Gallerimycin (LOC113523440) from Galleria mellonella (Greater wax moth).